Reading from the N-terminus, the 79-residue chain is uncharacterized protein (79 aa).

Belongs to the asfivirus D79L family.

This is an uncharacterized protein from African swine fever virus (isolate Tick/South Africa/Pretoriuskop Pr4/1996) (ASFV).